A 484-amino-acid polypeptide reads, in one-letter code: UDP-N-acetylmuramate--L-alanine ligase (484 aa).

Glycine 124–threonine 130 provides a ligand contact to ATP.

This sequence belongs to the MurCDEF family.

It is found in the cytoplasm. It carries out the reaction UDP-N-acetyl-alpha-D-muramate + L-alanine + ATP = UDP-N-acetyl-alpha-D-muramoyl-L-alanine + ADP + phosphate + H(+). The protein operates within cell wall biogenesis; peptidoglycan biosynthesis. Cell wall formation. This is UDP-N-acetylmuramate--L-alanine ligase from Pseudoalteromonas atlantica (strain T6c / ATCC BAA-1087).